We begin with the raw amino-acid sequence, 216 residues long: GTP cyclohydrolase 1 (216 aa).

3 residues coordinate Zn(2+): Cys108, His111, and Cys179.

It belongs to the GTP cyclohydrolase I family. As to quaternary structure, toroid-shaped homodecamer, composed of two pentamers of five dimers.

It catalyses the reaction GTP + H2O = 7,8-dihydroneopterin 3'-triphosphate + formate + H(+). It participates in cofactor biosynthesis; 7,8-dihydroneopterin triphosphate biosynthesis; 7,8-dihydroneopterin triphosphate from GTP: step 1/1. In Shewanella amazonensis (strain ATCC BAA-1098 / SB2B), this protein is GTP cyclohydrolase 1.